The following is a 115-amino-acid chain: Large ribosomal subunit protein bL19 (115 aa).

This sequence belongs to the bacterial ribosomal protein bL19 family.

Its function is as follows. This protein is located at the 30S-50S ribosomal subunit interface and may play a role in the structure and function of the aminoacyl-tRNA binding site. The polypeptide is Large ribosomal subunit protein bL19 (Lactobacillus delbrueckii subsp. bulgaricus (strain ATCC BAA-365 / Lb-18)).